The primary structure comprises 369 residues: Phosphoribosyl pyrophosphate synthase-associated protein 2 (369 aa).

M1 carries the N-acetylmethionine modification. S219, S227, and S233 each carry phosphoserine.

Belongs to the ribose-phosphate pyrophosphokinase family. As to quaternary structure, binds to PRPS1 and PRPS2.

Its function is as follows. Seems to play a negative regulatory role in 5-phosphoribose 1-diphosphate synthesis. The polypeptide is Phosphoribosyl pyrophosphate synthase-associated protein 2 (Prpsap2) (Mus musculus (Mouse)).